The following is a 277-amino-acid chain: Sulfur carrier protein FdhD (277 aa).

Catalysis depends on C123, which acts as the Cysteine persulfide intermediate.

It belongs to the FdhD family.

It is found in the cytoplasm. In terms of biological role, required for formate dehydrogenase (FDH) activity. Acts as a sulfur carrier protein that transfers sulfur from IscS to the molybdenum cofactor prior to its insertion into FDH. This Pectobacterium atrosepticum (strain SCRI 1043 / ATCC BAA-672) (Erwinia carotovora subsp. atroseptica) protein is Sulfur carrier protein FdhD.